The primary structure comprises 233 residues: Ion-translocating oxidoreductase complex subunit E (233 aa).

6 helical membrane-spanning segments follow: residues 18 to 38 (ALVQ…ATNA), 39 to 59 (LGLG…VSAL), 69 to 89 (IPIY…LINA), 92 to 112 (FGLY…CIVI), 128 to 148 (ALDG…LGAL), and 182 to 202 (PFLL…LLAG).

The protein belongs to the NqrDE/RnfAE family. The complex is composed of six subunits: RnfA, RnfB, RnfC, RnfD, RnfE and RnfG.

The protein localises to the cell inner membrane. Functionally, part of a membrane-bound complex that couples electron transfer with translocation of ions across the membrane. The protein is Ion-translocating oxidoreductase complex subunit E of Yersinia pseudotuberculosis serotype O:3 (strain YPIII).